Consider the following 184-residue polypeptide: Large ribosomal subunit protein uL6 (184 aa).

This sequence belongs to the universal ribosomal protein uL6 family. In terms of assembly, part of the 50S ribosomal subunit.

In terms of biological role, this protein binds to the 23S rRNA, and is important in its secondary structure. It is located near the subunit interface in the base of the L7/L12 stalk, and near the tRNA binding site of the peptidyltransferase center. In Cytophaga hutchinsonii (strain ATCC 33406 / DSM 1761 / CIP 103989 / NBRC 15051 / NCIMB 9469 / D465), this protein is Large ribosomal subunit protein uL6.